We begin with the raw amino-acid sequence, 260 residues long: Small ribosomal subunit protein uS3 (260 aa).

Residues 39 to 114 (LRQYIEQKLG…QIRINVVEVQ (76 aa)) form the KH type-2 domain. The disordered stretch occupies residues 219 to 260 (EVAAPPPSTRDRDRDRGDRDREPRRRQQQRRRQQFEDRSNEG). Basic and acidic residues-rich tracts occupy residues 227–243 (TRDR…EPRR) and 251–260 (QQFEDRSNEG).

The protein belongs to the universal ribosomal protein uS3 family. As to quaternary structure, part of the 30S ribosomal subunit. Forms a tight complex with proteins S10 and S14.

Binds the lower part of the 30S subunit head. Binds mRNA in the 70S ribosome, positioning it for translation. The chain is Small ribosomal subunit protein uS3 from Trichormus variabilis (strain ATCC 29413 / PCC 7937) (Anabaena variabilis).